Reading from the N-terminus, the 489-residue chain is Ketol-acid reductoisomerase (NADP(+)) (489 aa).

One can recognise a KARI N-terminal Rossmann domain in the interval 16–207; the sequence is IKKCRFMEKK…GGHRAGVLES (192 aa). NADP(+)-binding positions include 44–47, Arg67, Ser77, and 107–109; these read CGSQ and DKQ. His131 is an active-site residue. Gly157 contacts NADP(+). 2 consecutive KARI C-terminal knotted domains span residues 208 to 343 and 344 to 483; these read SFVA…QSPD and YDKK…MKNM. Mg(2+) is bound by residues Asp216, Glu220, Glu388, and Glu392. Position 413 (Ser413) interacts with substrate.

It belongs to the ketol-acid reductoisomerase family. The cofactor is Mg(2+).

It carries out the reaction (2R)-2,3-dihydroxy-3-methylbutanoate + NADP(+) = (2S)-2-acetolactate + NADPH + H(+). The catalysed reaction is (2R,3R)-2,3-dihydroxy-3-methylpentanoate + NADP(+) = (S)-2-ethyl-2-hydroxy-3-oxobutanoate + NADPH + H(+). It functions in the pathway amino-acid biosynthesis; L-isoleucine biosynthesis; L-isoleucine from 2-oxobutanoate: step 2/4. It participates in amino-acid biosynthesis; L-valine biosynthesis; L-valine from pyruvate: step 2/4. Functionally, involved in the biosynthesis of branched-chain amino acids (BCAA). Catalyzes an alkyl-migration followed by a ketol-acid reduction of (S)-2-acetolactate (S2AL) to yield (R)-2,3-dihydroxy-isovalerate. In the isomerase reaction, S2AL is rearranged via a Mg-dependent methyl migration to produce 3-hydroxy-3-methyl-2-ketobutyrate (HMKB). In the reductase reaction, this 2-ketoacid undergoes a metal-dependent reduction by NADPH to yield (R)-2,3-dihydroxy-isovalerate. The chain is Ketol-acid reductoisomerase (NADP(+)) from Buchnera aphidicola subsp. Diuraphis noxia.